The following is a 273-amino-acid chain: Histidine racemase (273 aa).

The Proton acceptor role is filled by Cys72. The Proton donor role is filled by Cys211.

Belongs to the histidine racemase family. As to quaternary structure, homodimer.

Its subcellular location is the cytoplasm. It catalyses the reaction L-histidine = D-histidine. Isomerase that catalyzes the conversion of L-histidine to D-histidine. Functions the biosynthesis of the metallophore staphylopine, which is involved in the acquisition of nickel, cobalt, zinc, copper, and iron, and thus enables bacterial growth inside the host, where metal access is limited. Therefore, this enzyme probably contributes to staphylococcal virulence. The reaction is reversible in vitro, the enzyme can produce D-histidine from the L-stereoisomer and vice versa. Appears to be specific for histidine as it cannot use other amino acids as substrate, including L-alanine and L-methionine. The chain is Histidine racemase from Staphylococcus aureus (strain Mu50 / ATCC 700699).